A 188-amino-acid polypeptide reads, in one-letter code: HGPRTase-like protein (188 aa).

This sequence belongs to the purine/pyrimidine phosphoribosyltransferase family. Archaeal HPRT subfamily.

In terms of biological role, may catalyze a purine salvage reaction, the substrate is unknown. In Halobacterium salinarum (strain ATCC 29341 / DSM 671 / R1), this protein is HGPRTase-like protein.